Here is a 1058-residue protein sequence, read N- to C-terminus: Vacuolar protein sorting-associated protein 54 (1058 aa).

Residues 369-389 adopt a coiled-coil conformation; the sequence is SKKIVEVHERYEQKKKLLAKL.

It belongs to the VPS54 family. Component of the Golgi-associated retrograde protein (GARP) complex, also called VFT (VPS fifty-three) complex, composed of vps-51, vps-52, vps-53 and vps-54. Within the complex interacts with vps-52 and vps-53.

It localises to the golgi apparatus. The protein localises to the trans-Golgi network. Acts as a component of the GARP complex that is involved in retrograde transport from early and late endosomes to the trans-Golgi network (TGN). The GARP complex facilitates tethering as well as SNARE complex assembly at the Golgi. The protein is Vacuolar protein sorting-associated protein 54 of Caenorhabditis elegans.